The following is a 206-amino-acid chain: Large ribosomal subunit protein uL4 (206 aa).

Residues 47 to 79 (GTKGQKNRSAVRGGGAKPWAQKGSGRARAGTSR) are disordered. Residues 69-79 (GSGRARAGTSR) are compositionally biased toward low complexity.

This sequence belongs to the universal ribosomal protein uL4 family. In terms of assembly, part of the 50S ribosomal subunit.

In terms of biological role, one of the primary rRNA binding proteins, this protein initially binds near the 5'-end of the 23S rRNA. It is important during the early stages of 50S assembly. It makes multiple contacts with different domains of the 23S rRNA in the assembled 50S subunit and ribosome. Functionally, forms part of the polypeptide exit tunnel. The sequence is that of Large ribosomal subunit protein uL4 from Hydrogenovibrio crunogenus (strain DSM 25203 / XCL-2) (Thiomicrospira crunogena).